A 72-amino-acid polypeptide reads, in one-letter code: Sperm protein associated with the nucleus on the X chromosome N1 (72 aa).

Positions 1 to 40 are disordered; sequence MEKPTSSTNGEKRKSPCDSNNKNDEMQETPNRDLVLEPSL. Residues 10–35 show a composition bias toward basic and acidic residues; sequence GEKRKSPCDSNNKNDEMQETPNRDLV.

It belongs to the SPAN-X family.

The polypeptide is Sperm protein associated with the nucleus on the X chromosome N1 (SPANXN1) (Gorilla gorilla gorilla (Western lowland gorilla)).